The chain runs to 697 residues: T-related protein (697 aa).

Residues 1–60 (MTTSHILSAVDPTTGLSGNVSGGGGGGGAGGGAGSGSPQHVTHNGHGHGHGLGGVAAVSG) are disordered. Composition is skewed to gly residues over residues 20–35 (VSGG…GAGS) and 50–60 (HGLGGVAAVSG). The T-box DNA-binding region spans 96 to 264 (LWLRFQNLTN…YNPFAKAFLD (169 aa)). Positions 316–330 (SVSSAESVGPSSGGS) are enriched in low complexity. 2 disordered regions span residues 316-407 (SVSS…GGIG) and 462-488 (VCSG…TSSP). The segment covering 337 to 351 (SLSSRSVAPTRTTPY) has biased composition (polar residues). 3 stretches are compositionally biased toward low complexity: residues 352–373 (SRPR…SSTS), 381–401 (QTPT…VSSS), and 469–488 (SSHN…TSSP).

It localises to the nucleus. In terms of biological role, required for the specification of the hindgut and anal pads. The sequence is that of T-related protein (byn) from Drosophila melanogaster (Fruit fly).